Here is a 193-residue protein sequence, read N- to C-terminus: Orotate phosphoribosyltransferase (193 aa).

Residue 117-125 (EDVVTTGLS) coordinates 5-phospho-alpha-D-ribose 1-diphosphate. The orotate site is built by threonine 121 and arginine 149.

This sequence belongs to the purine/pyrimidine phosphoribosyltransferase family. PyrE subfamily. Homodimer. Mg(2+) serves as cofactor.

The catalysed reaction is orotidine 5'-phosphate + diphosphate = orotate + 5-phospho-alpha-D-ribose 1-diphosphate. Its pathway is pyrimidine metabolism; UMP biosynthesis via de novo pathway; UMP from orotate: step 1/2. In terms of biological role, catalyzes the transfer of a ribosyl phosphate group from 5-phosphoribose 1-diphosphate to orotate, leading to the formation of orotidine monophosphate (OMP). This chain is Orotate phosphoribosyltransferase, found in Erythrobacter litoralis (strain HTCC2594).